The chain runs to 144 residues: Large ribosomal subunit protein uL16 (144 aa).

It belongs to the universal ribosomal protein uL16 family. As to quaternary structure, part of the 50S ribosomal subunit.

In terms of biological role, binds 23S rRNA and is also seen to make contacts with the A and possibly P site tRNAs. This Thermoanaerobacter sp. (strain X514) protein is Large ribosomal subunit protein uL16.